Consider the following 96-residue polypeptide: Co-chaperonin GroES (96 aa).

Belongs to the GroES chaperonin family. Heptamer of 7 subunits arranged in a ring. Interacts with the chaperonin GroEL.

It is found in the cytoplasm. In terms of biological role, together with the chaperonin GroEL, plays an essential role in assisting protein folding. The GroEL-GroES system forms a nano-cage that allows encapsulation of the non-native substrate proteins and provides a physical environment optimized to promote and accelerate protein folding. GroES binds to the apical surface of the GroEL ring, thereby capping the opening of the GroEL channel. The polypeptide is Co-chaperonin GroES (Acidithiobacillus ferrooxidans (strain ATCC 23270 / DSM 14882 / CIP 104768 / NCIMB 8455) (Ferrobacillus ferrooxidans (strain ATCC 23270))).